The following is a 207-amino-acid chain: Probable isochorismatase (207 aa).

It belongs to the isochorismatase family.

The catalysed reaction is isochorismate + H2O = (2S,3S)-2,3-dihydroxy-2,3-dihydrobenzoate + pyruvate. The protein operates within antibiotic biosynthesis; phenazine biosynthesis. Functionally, involved in the biosynthesis of the antibiotic phenazine, a nitrogen-containing heterocyclic molecule having important roles in virulence, competition and biological control. This isochorismatase may remove pyruvate from chorismate during the formation of the phenazine ring structure and/or stabilize the phenazine biosynthetic complex. This is Probable isochorismatase (phzA) from Pseudomonas chlororaphis (Pseudomonas aureofaciens).